Reading from the N-terminus, the 326-residue chain is MPPAISAFQAAYIGIEVLIALVSVPGNVLVIWAVKVNQALRDATFCFIVSLAVADVAVGALVIPLAILINIGPRTYFHTCLMVACPVLILTQSSILALLAIAVDRYLRVKIPLRYKTVVTPRRAAVAIAGCWILSFVVGLTPLFGWNRLGEAQRAWAANGSGGEPVIKCEFEKVISMEYMVYFNFFVWVLPPLLLMVLIYLEVFYLIRRQLGKKVSASSGDPQKYYGKELKIAKSLALILFLFALSWLPLHILNCITLFCPSCRKPSILMYIAIFLTHGNSAMNPIVYAFRIQKFRVTFLKIWNDHFRCQPTPPVDEDPPEEAPHD.

Over 1–10 (MPPAISAFQA) the chain is Extracellular. Residues 11–33 (AYIGIEVLIALVSVPGNVLVIWA) form a helical membrane-spanning segment. At 34-46 (VKVNQALRDATFC) the chain is on the cytoplasmic side. The chain crosses the membrane as a helical span at residues 47-69 (FIVSLAVADVAVGALVIPLAILI). Residues 70–80 (NIGPRTYFHTC) are Extracellular-facing. Cysteines 80 and 169 form a disulfide. Residues 81–102 (LMVACPVLILTQSSILALLAIA) traverse the membrane as a helical segment. The Cytoplasmic portion of the chain corresponds to 103–123 (VDRYLRVKIPLRYKTVVTPRR). A helical transmembrane segment spans residues 124 to 146 (AAVAIAGCWILSFVVGLTPLFGW). The Extracellular portion of the chain corresponds to 147-176 (NRLGEAQRAWAANGSGGEPVIKCEFEKVIS). Asparagine 159 carries an N-linked (GlcNAc...) asparagine glycan. A helical transmembrane segment spans residues 177–201 (MEYMVYFNFFVWVLPPLLLMVLIYL). The Cytoplasmic segment spans residues 202-235 (EVFYLIRRQLGKKVSASSGDPQKYYGKELKIAKS). Residues 236–259 (LALILFLFALSWLPLHILNCITLF) traverse the membrane as a helical segment. The Extracellular segment spans residues 260–267 (CPSCRKPS). Residues 268-292 (ILMYIAIFLTHGNSAMNPIVYAFRI) traverse the membrane as a helical segment. Residues 293–326 (QKFRVTFLKIWNDHFRCQPTPPVDEDPPEEAPHD) lie on the Cytoplasmic side of the membrane. Residue cysteine 309 is the site of S-palmitoyl cysteine attachment.

The protein belongs to the G-protein coupled receptor 1 family.

It is found in the cell membrane. In terms of biological role, receptor for adenosine. The activity of this receptor is mediated by G proteins which inhibit adenylyl cyclase. The chain is Adenosine receptor A1 (ADORA1) from Canis lupus familiaris (Dog).